Here is a 690-residue protein sequence, read N- to C-terminus: Lipase 2 (690 aa).

The first 37 residues, 1 to 37 (MLRGQEERKYSIRKYSIGVVSVLAATMFVVSSHEAQA), serve as a signal peptide directing secretion. The segment covering 52-71 (LNQPGEQGNAITSHQMQSGK) has biased composition (polar residues). Residues 52–266 (LNQPGEQGNA…KPTDKNTDNK (215 aa)) are disordered. Residues 72–81 (QLDDMHKENG) show a composition bias toward basic and acidic residues. Polar residues-rich tracts occupy residues 82-114 (KSGT…NDNQ), 124-171 (SKQS…QPSI), and 185-206 (PTST…AQDA). 2 stretches are compositionally biased toward basic and acidic residues: residues 225–237 (IDAK…RQSE) and 257–266 (KPTDKNTDNK). Catalysis depends on charge relay system residues S412 and H645.

The protein belongs to the AB hydrolase superfamily. Lipase family.

The protein resides in the secreted. It catalyses the reaction a triacylglycerol + H2O = a diacylglycerol + a fatty acid + H(+). The sequence is that of Lipase 2 (lip2) from Staphylococcus aureus (strain NCTC 8325 / PS 47).